We begin with the raw amino-acid sequence, 327 residues long: Mitochondrial coenzyme A transporter SLC25A42 (327 aa).

Solcar repeat units follow at residues 34–120 (KSVL…YKKL), 132–217 (LTPI…LKKL), and 227–315 (PYTF…TQIL). A run of 6 helical transmembrane segments spans residues 36–56 (VLNSLTSGALAGAVAKTAVAP), 92–112 (LWRGNSATMVRVIPYAAIQFC), 138–158 (LLAGALAGTTATLLTYPLDLV), 192–209 (GFTPTVLGVIPYAGISFF), 233–253 (LLFGACAGLFGQSSSYPLDVV), and 296–316 (VKGPVAVGISFTTFDLTQILL).

It belongs to the mitochondrial carrier (TC 2.A.29) family.

It is found in the mitochondrion inner membrane. It carries out the reaction ADP(out) + CoA(in) = ADP(in) + CoA(out). It catalyses the reaction 3'-dephospho-CoA(in) + ADP(out) = 3'-dephospho-CoA(out) + ADP(in). The enzyme catalyses adenosine 3',5'-bisphosphate(in) + ADP(out) = adenosine 3',5'-bisphosphate(out) + ADP(in). The catalysed reaction is AMP(in) + ADP(out) = AMP(out) + ADP(in). It carries out the reaction dADP(in) + ADP(out) = dADP(out) + ADP(in). It catalyses the reaction ADP(in) + ATP(out) = ADP(out) + ATP(in). In terms of biological role, mitochondrial carrier mediating the transport of coenzyme A (CoA) in mitochondria in exchange for intramitochondrial (deoxy)adenine nucleotides and adenosine 3',5'-diphosphate. In Xenopus laevis (African clawed frog), this protein is Mitochondrial coenzyme A transporter SLC25A42 (slc25a42).